Here is a 273-residue protein sequence, read N- to C-terminus: Light-independent protochlorophyllide reductase iron-sulfur ATP-binding protein (273 aa).

ATP contacts are provided by residues 12–17 (GIGKST) and Lys-41. Ser-16 contributes to the Mg(2+) binding site. [4Fe-4S] cluster-binding residues include Cys-97 and Cys-131. 182–183 (NR) contacts ATP.

Belongs to the NifH/BchL/ChlL family. As to quaternary structure, homodimer. Protochlorophyllide reductase is composed of three subunits; BchL, BchN and BchB. [4Fe-4S] cluster serves as cofactor.

It carries out the reaction chlorophyllide a + oxidized 2[4Fe-4S]-[ferredoxin] + 2 ADP + 2 phosphate = protochlorophyllide a + reduced 2[4Fe-4S]-[ferredoxin] + 2 ATP + 2 H2O. Its pathway is porphyrin-containing compound metabolism; bacteriochlorophyll biosynthesis (light-independent). Its function is as follows. Component of the dark-operative protochlorophyllide reductase (DPOR) that uses Mg-ATP and reduced ferredoxin to reduce ring D of protochlorophyllide (Pchlide) to form chlorophyllide a (Chlide). This reaction is light-independent. The L component serves as a unique electron donor to the NB-component of the complex, and binds Mg-ATP. In Chloroflexus aggregans (strain MD-66 / DSM 9485), this protein is Light-independent protochlorophyllide reductase iron-sulfur ATP-binding protein.